A 227-amino-acid polypeptide reads, in one-letter code: Large ribosomal subunit protein uL1 (227 aa).

It belongs to the universal ribosomal protein uL1 family. As to quaternary structure, part of the 50S ribosomal subunit.

Functionally, binds directly to 23S rRNA. The L1 stalk is quite mobile in the ribosome, and is involved in E site tRNA release. Its function is as follows. Protein L1 is also a translational repressor protein, it controls the translation of the L11 operon by binding to its mRNA. This is Large ribosomal subunit protein uL1 from Tropheryma whipplei (strain TW08/27) (Whipple's bacillus).